Reading from the N-terminus, the 319-residue chain is Ninja-family protein AFP4 (319 aa).

A compositionally biased stretch (basic and acidic residues) spans 39–54; it reads DSEHGENQQEAKKRED. 3 disordered regions span residues 39 to 63, 99 to 120, and 205 to 228; these read DSEH…EKDV, FVFD…IVGR, and VTGP…NVEN.

The protein belongs to the Ninja family. As to quaternary structure, interacts with ABI5/DPBF1, AREB3/DPBF3, EEL/DPBF4, ABF1 and ABF3/DPBF5. In terms of tissue distribution, predominantly expressed in roots and seedlings.

It is found in the nucleus. Functionally, acts as a negative regulator of abscisic acid (ABA) and salinity responses. This chain is Ninja-family protein AFP4 (AFP4), found in Arabidopsis thaliana (Mouse-ear cress).